Consider the following 106-residue polypeptide: Class II hydrophobin 6 (106 aa).

The first 16 residues, Met-1–Ala-16, serve as a signal peptide directing secretion. Cystine bridges form between Cys-36-Cys-86, Cys-47-Cys-77, Cys-48-Cys-60, and Cys-87-Cys-98.

Belongs to the cerato-ulmin hydrophobin family. In terms of assembly, homodimer. Homodimers further self-assemble to form highly ordered films at water-air interfaces through intermolecular interactions.

The protein localises to the secreted. It is found in the cell wall. Functionally, aerial growth, conidiation, and dispersal of filamentous fungi in the environment rely upon a capability of their secreting small amphipathic proteins called hydrophobins (HPBs) with low sequence identity. Class I can self-assemble into an outermost layer of rodlet bundles on aerial cell surfaces, conferring cellular hydrophobicity that supports fungal growth, development and dispersal; whereas Class II form highly ordered films at water-air interfaces through intermolecular interactions but contribute nothing to the rodlet structure. HFB2-6 is a class II hydrophobin that has a function in root colonization. Acts as an effector in poplar by up-regulating the expression of genes related to both the jasmonic acid and salicylic acid signal transduction pathways, which not only causes induced systemic resistance (ISR), but also systemic acquired resistance (SAR), giving poplar broad-spectrum resistance to pathogens. Also induces genes related to auxin signal transduction to promote poplar growth. Plays roles in interactions with both biotic and abiotic environmental conditions such as the presence of the pathogen Alternaria alternata or nutrient starvation conditions. This Trichoderma asperellum (strain ATCC 204424 / CBS 433.97 / NBRC 101777) protein is Class II hydrophobin 6.